Consider the following 127-residue polypeptide: Snaclec macrovipecetin subunit beta (127 aa).

Disulfide bonds link cysteine 4–cysteine 15, cysteine 32–cysteine 121, and cysteine 98–cysteine 113. The C-type lectin domain occupies 11–122; that stretch reads YEGHCYKVFD…CSRTYKFVCK (112 aa).

In terms of assembly, heterodimer of subunits alpha and beta; disulfide-linked. As to expression, expressed by the venom gland.

Its subcellular location is the secreted. Its function is as follows. Interferes with one step of hemostasis (modulation of platelet aggregation, or coagulation cascade, for example). The chain is Snaclec macrovipecetin subunit beta from Macrovipera lebetinus (Levantine viper).